We begin with the raw amino-acid sequence, 386 residues long: Hemagglutinin-esterase (386 aa).

A signal peptide spans 1-11 (MLIIFLFFYFC). The interval 1–121 (MLIIFLFFYF…SNDVWLLNKV (121 aa)) is esterase domain 1. The Virion surface segment spans residues 12-359 (YGFNEPLNVV…PICVYDFLPI (348 aa)). Ser34 serves as the catalytic Nucleophile. A disulfide bridge connects residues Cys38 and Cys59. 4 N-linked (GlcNAc...) asparagine; by host glycosylation sites follow: Asn83, Asn110, Asn145, and Asn168. A disulfide bridge connects residues Cys107 and Cys154. Residues 122-236 (RFYRALYSNM…GSYKVSTTAP (115 aa)) form a receptor binding region. Cystine bridges form between Cys180-Cys246, Cys188-Cys219, and Cys277-Cys282. The tract at residues 237 to 349 (FLSLPTKALC…RCPTSSIIKH (113 aa)) is esterase domain 2. An N-linked (GlcNAc...) asparagine; by host glycan is attached at Asn286. Residues Asp296 and His299 each act as charge relay system in the active site. Cys317 and Cys341 are oxidised to a cystine. N-linked (GlcNAc...) asparagine; by host glycosylation occurs at Asn328. Residues 360–380 (ILQGILLCLALLFVVFLLFLL) form a helical membrane-spanning segment. Residues 381-386 (YNDKSH) lie on the Intravirion side of the membrane.

Belongs to the influenza type C/coronaviruses hemagglutinin-esterase family. In terms of assembly, homodimer; disulfide-linked. Forms a complex with the M protein in the pre-Golgi. Associates then with S-M complex to form a ternary complex S-M-HE. Post-translationally, N-glycosylated in the host RER.

The protein resides in the virion membrane. It is found in the host cell membrane. The catalysed reaction is N-acetyl-9-O-acetylneuraminate + H2O = N-acetylneuraminate + acetate + H(+). The enzyme catalyses N-acetyl-4-O-acetylneuraminate + H2O = N-acetylneuraminate + acetate + H(+). Its function is as follows. Structural protein that makes short spikes at the surface of the virus. Contains receptor binding and receptor-destroying activities. Mediates de-O-acetylation of N-acetyl-4-O-acetylneuraminic acid, which is probably the receptor determinant recognized by the virus on the surface of erythrocytes and susceptible cells. This receptor-destroying activity is important for virus release as it probably helps preventing self-aggregation and ensures the efficient spread of the progeny virus from cell to cell. May serve as a secondary viral attachment protein for initiating infection, the spike protein being the major one. May become a target for both the humoral and the cellular branches of the immune system. The sequence is that of Hemagglutinin-esterase from Homo sapiens (Human).